The chain runs to 165 residues: Ubiquitin-conjugating enzyme E2 G2 (165 aa).

A2 is subject to N-acetylalanine. Residues 4–164 form the UBC core domain; sequence TALKRLMAEY…AKQIVQKSLG (161 aa). C89 (glycyl thioester intermediate) is an active-site residue.

It belongs to the ubiquitin-conjugating enzyme family. In terms of assembly, interacts with AUP1 (via C-terminus); the interaction recruits UBE2G2 to lipid droplets. Interacts with ubiquitin ligases AMFR/gp78 and RNF139/TRC8; recruitment to lipid droplets by AUP1 facilitates interaction of UBE2G2 with AMFR and RNF139, leading to sterol-induced ubiquitination of 3-hydroxy-3-methylglutaryl coenzyme A reductase and its subsequent proteasomal degradation.

Its subcellular location is the endoplasmic reticulum. The protein localises to the lipid droplet. It carries out the reaction S-ubiquitinyl-[E1 ubiquitin-activating enzyme]-L-cysteine + [E2 ubiquitin-conjugating enzyme]-L-cysteine = [E1 ubiquitin-activating enzyme]-L-cysteine + S-ubiquitinyl-[E2 ubiquitin-conjugating enzyme]-L-cysteine.. It functions in the pathway protein modification; protein ubiquitination. Accepts ubiquitin from the E1 complex and catalyzes its covalent attachment to other proteins. In vitro catalyzes 'Lys-48'-linked polyubiquitination. Involved in endoplasmic reticulum-associated degradation (ERAD). Required for sterol-induced ubiquitination of 3-hydroxy-3-methylglutaryl coenzyme A reductase and its subsequent proteasomal degradation. This is Ubiquitin-conjugating enzyme E2 G2 from Homo sapiens (Human).